A 110-amino-acid chain; its full sequence is Urease subunit beta (110 aa).

Belongs to the urease beta subunit family. Heterotrimer of UreA (gamma), UreB (beta) and UreC (alpha) subunits. Three heterotrimers associate to form the active enzyme.

Its subcellular location is the cytoplasm. The enzyme catalyses urea + 2 H2O + H(+) = hydrogencarbonate + 2 NH4(+). The protein operates within nitrogen metabolism; urea degradation; CO(2) and NH(3) from urea (urease route): step 1/1. In Pseudoalteromonas translucida (strain TAC 125), this protein is Urease subunit beta.